The sequence spans 378 residues: Isobutylamine N-hydroxylase (378 aa).

Exists in dimeric or trimeric form depending upon buffer conditions. It can form an isobutylamine N-hydroxylase two component enzyme system formed of a flavin reductase component (VlmR) and a monooxygenase component (VlmH).

It catalyses the reaction 2-methylpropan-1-amine + FADH2 + O2 = N-(2-methylpropyl)hydroxylamine + FAD + H2O + 2 H(+). The catalysed reaction is 2-methylpropan-1-amine + FMNH2 + O2 = N-(2-methylpropyl)hydroxylamine + FMN + H2O + 2 H(+). With respect to regulation, inhibited by 5',5'-dithio-bis(2-nitrobenzoic acid) (DTNB) and 4-(hydroxymercuri)benzoic acid (p-HMB). In terms of biological role, involved in the biosynthesis of the azoxy antibiotic valanimycin, which has an antitumor activity. Catalyzes the oxidation of isobutylamine to isobutylhydroxylamine via the formation of a flavin 4a-hydroperoxide. Unlike other known N-hydroxylases, isobutylamine N-hydroxylase cannot carry out the reduction of the flavin cofactor and requires the NADPH-flavin oxidoreductase VlmR. Also able to oxidize propan-1-amine, butan-1-amine, butan-2-amine and benzylamine. It has a similar activity with either FMNH(2) or FADH(2). This is Isobutylamine N-hydroxylase from Streptomyces viridifaciens.